The sequence spans 274 residues: Diaminopimelate epimerase (274 aa).

Substrate-binding residues include asparagine 11, glutamine 44, and asparagine 64. The Proton donor role is filled by cysteine 73. Substrate contacts are provided by residues 74-75 (GN), asparagine 157, asparagine 190, and 208-209 (ER). Cysteine 217 (proton acceptor) is an active-site residue. Position 218–219 (218–219 (GS)) interacts with substrate.

Belongs to the diaminopimelate epimerase family. In terms of assembly, homodimer.

It localises to the cytoplasm. It catalyses the reaction (2S,6S)-2,6-diaminopimelate = meso-2,6-diaminopimelate. It functions in the pathway amino-acid biosynthesis; L-lysine biosynthesis via DAP pathway; DL-2,6-diaminopimelate from LL-2,6-diaminopimelate: step 1/1. In terms of biological role, catalyzes the stereoinversion of LL-2,6-diaminopimelate (L,L-DAP) to meso-diaminopimelate (meso-DAP), a precursor of L-lysine and an essential component of the bacterial peptidoglycan. In Pectobacterium atrosepticum (strain SCRI 1043 / ATCC BAA-672) (Erwinia carotovora subsp. atroseptica), this protein is Diaminopimelate epimerase.